A 474-amino-acid polypeptide reads, in one-letter code: Glutamate--tRNA ligase (474 aa).

Positions 9 to 19 match the 'HIGH' region motif; that stretch reads PSPTGYLHVGG. Positions 240–244 match the 'KMSKS' region motif; that stretch reads KLSKR. Lys-243 is a binding site for ATP.

It belongs to the class-I aminoacyl-tRNA synthetase family. Glutamate--tRNA ligase type 1 subfamily. As to quaternary structure, monomer.

Its subcellular location is the cytoplasm. It carries out the reaction tRNA(Glu) + L-glutamate + ATP = L-glutamyl-tRNA(Glu) + AMP + diphosphate. In terms of biological role, catalyzes the attachment of glutamate to tRNA(Glu) in a two-step reaction: glutamate is first activated by ATP to form Glu-AMP and then transferred to the acceptor end of tRNA(Glu). In Vibrio vulnificus (strain YJ016), this protein is Glutamate--tRNA ligase.